A 456-amino-acid polypeptide reads, in one-letter code: tRNA modification GTPase MnmE (456 aa).

Arginine 25, glutamate 82, and lysine 121 together coordinate (6S)-5-formyl-5,6,7,8-tetrahydrofolate. Residues 217–379 (GMKVVIAGRP…LKAHLKSVMG (163 aa)) enclose the TrmE-type G domain. Asparagine 227 is a K(+) binding site. Residues 227–232 (NAGKSS), 246–252 (TNIAGTT), and 271–274 (DTAG) each bind GTP. Mg(2+) is bound at residue serine 231. Threonine 246, isoleucine 248, and threonine 251 together coordinate K(+). A Mg(2+)-binding site is contributed by threonine 252. A (6S)-5-formyl-5,6,7,8-tetrahydrofolate-binding site is contributed by lysine 456.

The protein belongs to the TRAFAC class TrmE-Era-EngA-EngB-Septin-like GTPase superfamily. TrmE GTPase family. Homodimer. Heterotetramer of two MnmE and two MnmG subunits. It depends on K(+) as a cofactor.

It is found in the cytoplasm. In terms of biological role, exhibits a very high intrinsic GTPase hydrolysis rate. Involved in the addition of a carboxymethylaminomethyl (cmnm) group at the wobble position (U34) of certain tRNAs, forming tRNA-cmnm(5)s(2)U34. This chain is tRNA modification GTPase MnmE, found in Saccharophagus degradans (strain 2-40 / ATCC 43961 / DSM 17024).